A 159-amino-acid polypeptide reads, in one-letter code: Ribosomal RNA large subunit methyltransferase H (159 aa).

Positions 76 and 108 each coordinate S-adenosyl-L-methionine.

This sequence belongs to the RNA methyltransferase RlmH family. Homodimer.

It is found in the cytoplasm. The catalysed reaction is pseudouridine(1915) in 23S rRNA + S-adenosyl-L-methionine = N(3)-methylpseudouridine(1915) in 23S rRNA + S-adenosyl-L-homocysteine + H(+). Functionally, specifically methylates the pseudouridine at position 1915 (m3Psi1915) in 23S rRNA. The polypeptide is Ribosomal RNA large subunit methyltransferase H (Ligilactobacillus salivarius (strain UCC118) (Lactobacillus salivarius)).